A 125-amino-acid chain; its full sequence is Small ribosomal subunit protein eS8 (125 aa).

Residues 1–36 (MKDQGRSTRKRTGGRLHDVSKKKRHQLGREPAETTV) are disordered. Residues 7–26 (STRKRTGGRLHDVSKKKRHQ) show a composition bias toward basic residues. Basic and acidic residues predominate over residues 27–36 (LGREPAETTV).

This sequence belongs to the eukaryotic ribosomal protein eS8 family. Part of the 30S ribosomal subunit.

This Haloquadratum walsbyi (strain DSM 16790 / HBSQ001) protein is Small ribosomal subunit protein eS8.